The sequence spans 450 residues: Phosphoglucosamine mutase (450 aa).

Ser101 serves as the catalytic Phosphoserine intermediate. Residues Ser101, Asp240, Asp242, and Asp244 each coordinate Mg(2+). A Phosphoserine modification is found at Ser101.

The protein belongs to the phosphohexose mutase family. Requires Mg(2+) as cofactor. Activated by phosphorylation.

The catalysed reaction is alpha-D-glucosamine 1-phosphate = D-glucosamine 6-phosphate. Functionally, catalyzes the conversion of glucosamine-6-phosphate to glucosamine-1-phosphate. This is Phosphoglucosamine mutase from Streptococcus agalactiae serotype Ia (strain ATCC 27591 / A909 / CDC SS700).